Here is a 306-residue protein sequence, read N- to C-terminus: Arylesterase (306 aa).

An Involved in the stabilization of the negatively charged intermediate by the formation of the oxyanion hole motif is present at residues 82–84 (HGG). Active-site residues include serine 156, aspartate 251, and histidine 281.

In terms of assembly, monomer.

The catalysed reaction is a phenyl acetate + H2O = a phenol + acetate + H(+). It carries out the reaction An aryl dialkyl phosphate + H2O = dialkyl phosphate + an aryl alcohol.. Completely inhibited by chemical modifiers that are specific to Cys (HgCl(2) and p-chloromercuribenzoic acid), His (diethyl pyrocarbonate) and Ser (diisopropyl fluorophosphate and phenylmethanesulfonyl fluoride). No significant effect with chemical modifiers specific to Lys (pyridoxal 5'-phosphate) and Arg (phenylglyoxal). Not inhibited by inhibitors of A-esterases (paraoxon) or C-esterases (physostigmine/eserine). Activity is also not effected by incubation with 5 mM divalent cations for 30 minutes at 30 degrees Celsius or with 10 mM EDTA for 60 minutes at 75 degrees Celsius. Has a broad substrate specificity. Hydrolyzes various p-nitrophenyl phosphates, aromatic esters and p-nitrophenyl fatty acids in vitro. Most active against paraoxon, phenyl acetate and p-nitrophenyl caproate (C6), respectively. Also has tributyrinase activity, but shows no hydrolytic activity toward other triacylglycerols including tricaprylin, trimyristin, tripalmitin or triolein in vitro. The polypeptide is Arylesterase (Saccharolobus solfataricus (Sulfolobus solfataricus)).